We begin with the raw amino-acid sequence, 393 residues long: Phosphoglycerate kinase (393 aa).

Residues 21–23, R36, 59–62, R113, and R146 each bind substrate; these read DLN and HLGR. ATP contacts are provided by residues K197, E319, and 345–348; that span reads GGDT.

It belongs to the phosphoglycerate kinase family. As to quaternary structure, monomer.

Its subcellular location is the cytoplasm. It carries out the reaction (2R)-3-phosphoglycerate + ATP = (2R)-3-phospho-glyceroyl phosphate + ADP. Its pathway is carbohydrate degradation; glycolysis; pyruvate from D-glyceraldehyde 3-phosphate: step 2/5. This is Phosphoglycerate kinase from Nitratidesulfovibrio vulgaris (strain DSM 19637 / Miyazaki F) (Desulfovibrio vulgaris).